A 218-amino-acid polypeptide reads, in one-letter code: Peptide methionine sulfoxide reductase MsrA (218 aa).

Cys-57 is a catalytic residue.

The protein belongs to the MsrA Met sulfoxide reductase family.

The catalysed reaction is L-methionyl-[protein] + [thioredoxin]-disulfide + H2O = L-methionyl-(S)-S-oxide-[protein] + [thioredoxin]-dithiol. It carries out the reaction [thioredoxin]-disulfide + L-methionine + H2O = L-methionine (S)-S-oxide + [thioredoxin]-dithiol. Functionally, has an important function as a repair enzyme for proteins that have been inactivated by oxidation. Catalyzes the reversible oxidation-reduction of methionine sulfoxide in proteins to methionine. The polypeptide is Peptide methionine sulfoxide reductase MsrA (Brucella melitensis biotype 2 (strain ATCC 23457)).